The following is a 382-amino-acid chain: Flap endonuclease 1-A (382 aa).

An N-domain region spans residues 1 to 104 (MGIHGLAKLI…GELAKRSERR (104 aa)). Position 34 (Asp-34) interacts with Mg(2+). 2 residues coordinate DNA: Arg-47 and Arg-70. Residues Asp-86, Glu-158, Glu-160, Asp-179, and Asp-181 each contribute to the Mg(2+) site. The tract at residues 122 to 253 (NIEKFTKRLV…KRAIDLIRQH (132 aa)) is I-domain. Residue Glu-158 coordinates DNA. 2 residues coordinate DNA: Gly-231 and Asp-233. Residue Asp-233 participates in Mg(2+) binding. Residues 336-344 (TQGRLDDFF) are interaction with PCNA. The interval 350-382 (VSSTKRKEAESKGSAKKKAKTGGTPAGKFKRGK) is disordered.

It belongs to the XPG/RAD2 endonuclease family. FEN1 subfamily. In terms of assembly, interacts with PCNA. Three molecules of fen1 bind to one PCNA trimer with each molecule binding to one PCNA monomer. PCNA stimulates the nuclease activity without altering cleavage specificity. The cofactor is Mg(2+). In terms of processing, phosphorylated. Phosphorylation upon DNA damage induces relocalization to the nuclear plasma.

Its subcellular location is the nucleus. It is found in the nucleolus. The protein localises to the nucleoplasm. It localises to the mitochondrion. Functionally, structure-specific nuclease with 5'-flap endonuclease and 5'-3' exonuclease activities involved in DNA replication and repair. During DNA replication, cleaves the 5'-overhanging flap structure that is generated by displacement synthesis when DNA polymerase encounters the 5'-end of a downstream Okazaki fragment. It enters the flap from the 5'-end and then tracks to cleave the flap base, leaving a nick for ligation. Also involved in the long patch base excision repair (LP-BER) pathway, by cleaving within the apurinic/apyrimidinic (AP) site-terminated flap. Acts as a genome stabilization factor that prevents flaps from equilibrating into structures that lead to duplications and deletions. Also possesses 5'-3' exonuclease activity on nicked or gapped double-stranded DNA, and exhibits RNase H activity. Also involved in replication and repair of rDNA and in repairing mitochondrial DNA. The sequence is that of Flap endonuclease 1-A (fen1-a) from Xenopus laevis (African clawed frog).